A 297-amino-acid chain; its full sequence is Ribosomal RNA small subunit methyltransferase H (297 aa).

Residues 37–39 (GGH), E56, F87, D102, and H109 each bind S-adenosyl-L-methionine.

It belongs to the methyltransferase superfamily. RsmH family.

It is found in the cytoplasm. The enzyme catalyses cytidine(1402) in 16S rRNA + S-adenosyl-L-methionine = N(4)-methylcytidine(1402) in 16S rRNA + S-adenosyl-L-homocysteine + H(+). Specifically methylates the N4 position of cytidine in position 1402 (C1402) of 16S rRNA. This is Ribosomal RNA small subunit methyltransferase H from Borrelia hermsii (strain HS1 / DAH).